The chain runs to 736 residues: Segment polarity protein dishevelled homolog DVL-2 (736 aa).

A DIX domain is found at 11–93 (VGETKVIYHL…RVVSWLVSSD (83 aa)). The segment at 93 to 255 (DTPQPEVAPP…RMERTSSFSS (163 aa)) is disordered. The span at 111-122 (VPPPPPLPPLPP) shows a compositional bias: pro residues. Basic and acidic residues predominate over residues 159-171 (LRRDRPRRRDSSE). A compositionally biased stretch (low complexity) spans 193-208 (ESSSTLMTSELESTSL). S211 carries the phosphoserine modification. Residues 218–230 (SRFSSSTEQSSAS) are compositionally biased toward polar residues. Residues 232-244 (LLKRHRRRRKQRP) show a composition bias toward basic residues. The PDZ domain occupies 267–339 (TVTLNMEKYN…NDDAVRVLRD (73 aa)). A DEP domain is found at 433-507 (PESGLEVRDR…SEQCYYVFGD (75 aa)). Over residues 558–568 (PHPYSPQPPPY) the composition is skewed to pro residues. A disordered region spans residues 558–665 (PHPYSPQPPP…PNLRALPGLH (108 aa)). 2 stretches are compositionally biased toward low complexity: residues 581–598 (ASSQ…TRSD) and 614–629 (SKSG…SRGG).

It belongs to the DSH family. As to quaternary structure, interacts through its PDZ domain with the C-terminal regions of VANGL1 and VANGL2. Interacts with Rac. Interacts with ARRB1; the interaction is enhanced by phosphorylation of DVL1. Can form large oligomers (via DIX domain). Interacts (via DIX domain) with DIXDC1 (via DIX domain). Interacts (via DEP domain) with AP2M1 and the AP-2 complex. Interacts with FAM105B/otulin. Interacts with DCDC2. Interacts (when phosphorylated) with FOXK1 and FOXK2; the interaction induces DVL2 nuclear translocation. Interacts with MAPK15. Interacts with PKD1 (via extracellular domain). Interacts with LMBR1L. Phosphorylated by CSNK1D. WNT3A induces DVL2 phosphorylation by CSNK1E and MARK kinases. In terms of processing, ubiquitinated via 'Lys-63'-linked polyubiquitin chains; leading to its autophagy-mediated degradation. Ubiquitous.

It is found in the cell membrane. It localises to the cytoplasm. The protein resides in the cytosol. Its subcellular location is the cytoplasmic vesicle. The protein localises to the nucleus. In terms of biological role, plays a role in the signal transduction pathways mediated by multiple Wnt genes. Participates both in canonical and non-canonical Wnt signaling by binding to the cytoplasmic C-terminus of frizzled family members and transducing the Wnt signal to down-stream effectors. Promotes internalization and degradation of frizzled proteins upon Wnt signaling. This Mus musculus (Mouse) protein is Segment polarity protein dishevelled homolog DVL-2 (Dvl2).